The chain runs to 1217 residues: DNA-directed RNA polymerase subunit beta' (1217 aa).

Residues C60, C62, C75, and C78 each contribute to the Zn(2+) site. D449, D451, and D453 together coordinate Mg(2+). The Zn(2+) site is built by C818, C892, C899, and C902.

The protein belongs to the RNA polymerase beta' chain family. As to quaternary structure, the RNAP catalytic core consists of 2 alpha, 1 beta, 1 beta' and 1 omega subunit. When a sigma factor is associated with the core the holoenzyme is formed, which can initiate transcription. The cofactor is Mg(2+). Zn(2+) is required as a cofactor.

It carries out the reaction RNA(n) + a ribonucleoside 5'-triphosphate = RNA(n+1) + diphosphate. DNA-dependent RNA polymerase catalyzes the transcription of DNA into RNA using the four ribonucleoside triphosphates as substrates. This Enterococcus faecalis (strain ATCC 700802 / V583) protein is DNA-directed RNA polymerase subunit beta'.